The sequence spans 1035 residues: Beta-galactosidase (1035 aa).

Substrate is bound by residues N109 and D208. Residue D208 coordinates Na(+). Mg(2+) contacts are provided by E424, H426, and E469. Substrate is bound by residues E469 and 545-548 (EYAH). The active-site Proton donor is E469. E545 (nucleophile) is an active-site residue. Position 605 (N605) interacts with Mg(2+). Na(+) contacts are provided by F609 and N612. N612 and W1011 together coordinate substrate.

This sequence belongs to the glycosyl hydrolase 2 family. As to quaternary structure, homotetramer. Requires Mg(2+) as cofactor. Na(+) serves as cofactor.

It catalyses the reaction Hydrolysis of terminal non-reducing beta-D-galactose residues in beta-D-galactosides.. This Klebsiella pneumoniae (strain 342) protein is Beta-galactosidase.